An 815-amino-acid chain; its full sequence is Vacuolar proton translocating ATPase 100 kDa subunit (815 aa).

Over 1–402 (MSFLRPSIWR…NAYGIAHYRE (402 aa)) the chain is Cytoplasmic. Residues 403 to 421 (VNPAVLTIVTFPFLFGVMF) traverse the membrane as a helical segment. The Vacuolar segment spans residues 422–423 (GD). A helical transmembrane segment spans residues 424 to 440 (VGHGALLLLSALGLISL). The Cytoplasmic segment spans residues 441–454 (EKKLAGKKLNELIQ). A helical transmembrane segment spans residues 455–484 (MPFDGRYVLFLMSLFSIYVGFIYNECFSIP). Residues 485–530 (MNIFGSQYNLNSTTGLYTYQHTDRVYPVGVDPLWKGAPNELVYYNS) lie on the Vacuolar side of the membrane. A helical transmembrane segment spans residues 531 to 550 (FKMKLSIIFGVVQMSVGICF). Over 551-571 (SLLNYLNQKGPIKIVNILTQF) the chain is Cytoplasmic. Residues 572–592 (VPQMIFLWSIFGYMSVLIILK) form a helical membrane-spanning segment. Residues 593 to 639 (WVVPYRSFEVDKVDPPFILPTIIAMFLSPGGTPDVVFFSGQGAVQTA) lie on the Vacuolar side of the membrane. The chain crosses the membrane as a helical span at residues 640–659 (LLFLALISIPVMLVIKPLFM). Residues 660-706 (KRFHFQEVERKKLGHHEEEHDDEALYTGHHGEEFEMGEVFVHQVIHT) lie on the Cytoplasmic side of the membrane. The chain crosses the membrane as a helical span at residues 707–731 (IEFVLGAVSNTASYLRLWALSLAHS). Over 732–749 (ELSSVFWERILIGQVERG) the chain is Vacuolar. A helical transmembrane segment spans residues 750–788 (NPFLAFVGFGAWLGASVAVLLLMESLSAFLHALRLHWVE). Over 789–815 (FQNKFYIGDGVRFIPYSATRILSEDDE) the chain is Cytoplasmic.

The protein belongs to the V-ATPase 116 kDa subunit family. The V-ATPase is a heteromultimeric enzyme.

The protein resides in the cytoplasmic vesicle membrane. The protein localises to the endosome membrane. It is found in the vacuole membrane. Its subcellular location is the lysosome membrane. Its function is as follows. Essential component of the vacuolar proton pump (V-ATPase), a multimeric enzyme that catalyzes the translocation of protons across the membranes. Required for assembly and activity of the V-ATPase. Required in both the contractile vacuole system and the endosomal/lysosomal system. Also required for cytosolic pH regulation. This is Vacuolar proton translocating ATPase 100 kDa subunit (vatM) from Dictyostelium discoideum (Social amoeba).